We begin with the raw amino-acid sequence, 151 residues long: IFN signaling evasion protein OPG029 (151 aa).

It belongs to the orthopoxvirus OPG029 family. As to quaternary structure, interacts with host TANK, TBKBP1 and AZI2; these interactions prevent interferon production. Interacts with host STAT2.

Functionally, prevents establishment of cellular antiviral state by blocking virus-induced phosphorylation and activation of interferon regulatory factors 3/IRF3 and 7/IRF7, transcription factors critical for the induction of interferons alpha and beta. This blockage is produced through the inhibition of host TBK1, by binding host TBK1 adapter proteins TBKBP1 and AZI2, thereby producing a strong inhibition of the phosphorylation and activation of IRF3 and IRF7. Also acts as an inhibitor of the cellular response to type I IFN by interacting with host STAT2. Mechanistically, exerts its inhibitory effect after host ISGF3 complex (composed of STAT1, STAT2 and IRF9) binding to the interferon stimulated response element (ISRE). This is IFN signaling evasion protein OPG029 (OPG029) from Homo sapiens (Human).